A 211-amino-acid polypeptide reads, in one-letter code: Pyridoxine/pyridoxamine 5'-phosphate oxidase (211 aa).

Substrate-binding positions include 7–10 and Lys-65; that span reads RREY. FMN is bound by residues 60-65, 75-76, Lys-82, and Gln-104; these read RIVLLK and FT. Substrate contacts are provided by Tyr-122, Arg-126, and Ser-130. FMN-binding positions include 139-140 and Trp-184; that span reads QS. Residue 190–192 participates in substrate binding; the sequence is RLH. Position 194 (Arg-194) interacts with FMN.

It belongs to the pyridoxamine 5'-phosphate oxidase family. As to quaternary structure, homodimer. FMN is required as a cofactor.

The enzyme catalyses pyridoxamine 5'-phosphate + O2 + H2O = pyridoxal 5'-phosphate + H2O2 + NH4(+). It catalyses the reaction pyridoxine 5'-phosphate + O2 = pyridoxal 5'-phosphate + H2O2. It participates in cofactor metabolism; pyridoxal 5'-phosphate salvage; pyridoxal 5'-phosphate from pyridoxamine 5'-phosphate: step 1/1. Its pathway is cofactor metabolism; pyridoxal 5'-phosphate salvage; pyridoxal 5'-phosphate from pyridoxine 5'-phosphate: step 1/1. Functionally, catalyzes the oxidation of either pyridoxine 5'-phosphate (PNP) or pyridoxamine 5'-phosphate (PMP) into pyridoxal 5'-phosphate (PLP). This is Pyridoxine/pyridoxamine 5'-phosphate oxidase from Teredinibacter turnerae (strain ATCC 39867 / T7901).